Here is a 179-residue protein sequence, read N- to C-terminus: Transmembrane protein 196 (179 aa).

A run of 4 helical transmembrane segments spans residues 11–31 (LLVL…VGAV), 44–61 (LGDS…ILCA), 67–87 (LVMI…ILNF), and 100–120 (LYPL…GCTL).

It localises to the cytoplasm. It is found in the membrane. Acts as a tumor suppressor in lung cancer. Inhibits tumor cell growth by inhibiting cell proliferation and migration and promoting cell apoptosis. Inhibits metastasis of lung cancer by suppressing beta-catenin expression in the Wnt/beta-catenin signaling pathway. This is Transmembrane protein 196 (TMEM196) from Pongo abelii (Sumatran orangutan).